Here is a 1264-residue protein sequence, read N- to C-terminus: Ubiquitin carboxyl-terminal hydrolase usp-48 (1264 aa).

The USP domain maps to 108 to 430 (AGLINGGNFC…ACYGLLYRRR (323 aa)). Cysteine 117 functions as the Nucleophile in the catalytic mechanism. Histidine 366 acts as the Proton acceptor in catalysis. Disordered stretches follow at residues 390 to 415 (IPKP…KEKY), 522 to 610 (AKGE…IMDT), and 630 to 679 (TVEV…PVSS). 2 stretches are compositionally biased toward basic and acidic residues: residues 403–415 (KTEK…KEKY) and 532–543 (EASENEEKKKNE). The stretch at 516–547 (AQEYEVAKGEKKKKKKEASENEEKKKNEEDEA) forms a coiled coil. Residues 565-575 (SEPSTSAAATE) are compositionally biased toward low complexity. 2 stretches are compositionally biased toward polar residues: residues 587 to 599 (ETPN…STQV) and 663 to 678 (NGTN…QPVS).

This sequence belongs to the peptidase C19 family. As to expression, broadly expressed. Expressed in germline.

It localises to the nucleus. Its subcellular location is the chromosome. The enzyme catalyses Thiol-dependent hydrolysis of ester, thioester, amide, peptide and isopeptide bonds formed by the C-terminal Gly of ubiquitin (a 76-residue protein attached to proteins as an intracellular targeting signal).. Its function is as follows. Recognizes and hydrolyzes the peptide bond at the C-terminal Gly of ubiquitin. Involved in the processing of poly-ubiquitin precursors as well as that of ubiquitinated proteins. Required post-developmentally to restrict the plasticity of epidermal cells, probably by regulating gene expression. The chain is Ubiquitin carboxyl-terminal hydrolase usp-48 from Caenorhabditis elegans.